The primary structure comprises 109 residues: Flagellar transcriptional regulator FlhD (109 aa).

It belongs to the FlhD family. In terms of assembly, homodimer; disulfide-linked. Forms a heterohexamer composed of two FlhC and four FlhD subunits. Each FlhC binds a FlhD dimer, forming a heterotrimer, and a hexamer assembles by dimerization of two heterotrimers.

The protein resides in the cytoplasm. In terms of biological role, functions in complex with FlhC as a master transcriptional regulator that regulates transcription of several flagellar and non-flagellar operons by binding to their promoter region. Activates expression of class 2 flagellar genes, including fliA, which is a flagellum-specific sigma factor that turns on the class 3 genes. Also regulates genes whose products function in a variety of physiological pathways. The chain is Flagellar transcriptional regulator FlhD from Acidovorax sp. (strain JS42).